Here is a 174-residue protein sequence, read N- to C-terminus: MATVTELKAVLKDTLEKRGVLGHLKARIRAEVFNALDDDREPRPSLSHENLLINELIREYLEFNKYKYTASVLIAESGQPVVPLDRQFLIRELNAFEESKDNSIPLLYGILAHFLRGPPDGAQNVLLTESTLHPATKHLSWKPSRRPDDDHVRKDTGPRTTTEELPAAAQAVSR.

The segment at 1–104 (MATVTELKAV…AFEESKDNSI (104 aa)) is necessary and sufficient for homooligomerization and localization to centrosomes and pericentriolar satellites. Residues 49–81 (ENLLINELIREYLEFNKYKYTASVLIAESGQPV) form the LisH domain. The tract at residues 136-174 (TKHLSWKPSRRPDDDHVRKDTGPRTTTEELPAAAQAVSR) is disordered. A Phosphoserine modification is found at S144. Basic and acidic residues predominate over residues 145-157 (RRPDDDHVRKDTG).

It belongs to the CEP43 family. As to quaternary structure, homooligomer; probably required for localization to centrosomes. Forms a complex with KIAA0753/OFIP and OFD1; within this complex may stabilize the interaction between OFD1 and KIAA0753/OFIP. Interacts with PCM1; this interaction may be mediated by KIAA0753/OFIP.

The protein resides in the cytoplasm. It is found in the cytoskeleton. Its subcellular location is the microtubule organizing center. It localises to the centrosome. The protein localises to the centriole. The protein resides in the cell projection. It is found in the cilium. Its subcellular location is the cilium basal body. It localises to the cytoplasmic granule. The protein localises to the centriolar satellite. Functionally, involved in the biogenesis of cilia. Required for the recruitment of PLK1 to centrosomes and S phase progression. In Mus musculus (Mouse), this protein is Centrosomal protein 20.